Here is a 202-residue protein sequence, read N- to C-terminus: Small ribosomal subunit protein uS5 (202 aa).

The segment covering 1 to 13 has biased composition (gly residues); that stretch reads MPGQQRRGGGSGG. The tract at residues 1-31 is disordered; that stretch reads MPGQQRRGGGSGGSDRRERRDRSGGGPAQEK. Positions 14-23 are enriched in basic and acidic residues; sequence SDRRERRDRS. The S5 DRBM domain occupies 34 to 97; sequence YVERVVAINR…EEAKKHFFKV (64 aa).

The protein belongs to the universal ribosomal protein uS5 family. Part of the 30S ribosomal subunit. Contacts proteins S4 and S8.

Functionally, with S4 and S12 plays an important role in translational accuracy. Its function is as follows. Located at the back of the 30S subunit body where it stabilizes the conformation of the head with respect to the body. The polypeptide is Small ribosomal subunit protein uS5 (Parafrankia sp. (strain EAN1pec)).